We begin with the raw amino-acid sequence, 260 residues long: Triosephosphate isomerase (260 aa).

11 to 13 (NWK) provides a ligand contact to substrate. Catalysis depends on His-103, which acts as the Electrophile. The active-site Proton acceptor is the Glu-175. Residues Gly-181, Ser-220, and 241–242 (GG) each bind substrate.

This sequence belongs to the triosephosphate isomerase family. Homodimer.

Its subcellular location is the cytoplasm. It carries out the reaction D-glyceraldehyde 3-phosphate = dihydroxyacetone phosphate. The protein operates within carbohydrate biosynthesis; gluconeogenesis. It participates in carbohydrate degradation; glycolysis; D-glyceraldehyde 3-phosphate from glycerone phosphate: step 1/1. Functionally, involved in the gluconeogenesis. Catalyzes stereospecifically the conversion of dihydroxyacetone phosphate (DHAP) to D-glyceraldehyde-3-phosphate (G3P). The sequence is that of Triosephosphate isomerase from Shewanella denitrificans (strain OS217 / ATCC BAA-1090 / DSM 15013).